A 121-amino-acid chain; its full sequence is MAFDKDAIIASLKDATILDLADLVSAIEEEFNVSAAAPVAAAGGADGAAAAKTDFDVELTSAGTAKVKVIKAVREATGLGLKEAKDLVDNAPSIVKEGLDEAAANDLKAALEETGASVTLK.

This sequence belongs to the bacterial ribosomal protein bL12 family. As to quaternary structure, homodimer. Part of the ribosomal stalk of the 50S ribosomal subunit. Forms a multimeric L10(L12)X complex, where L10 forms an elongated spine to which 2 to 4 L12 dimers bind in a sequential fashion. Binds GTP-bound translation factors.

Its function is as follows. Forms part of the ribosomal stalk which helps the ribosome interact with GTP-bound translation factors. Is thus essential for accurate translation. In Leuconostoc citreum (strain KM20), this protein is Large ribosomal subunit protein bL12.